A 1486-amino-acid polypeptide reads, in one-letter code: Chromosome partition protein MukB (1486 aa).

34-41 is a binding site for ATP; sequence GGNGAGKS. Coiled-coil stretches lie at residues 326–418, 444–480, and 509–603; these read LEAD…QYNQ, LETF…QAYQ, and RHLA…RAPV. The segment at 666 to 783 is flexible hinge; the sequence is PGGSEDQRLN…EVPLFGRAAR (118 aa). Coiled-coil stretches lie at residues 835–923, 977–1115, and 1209–1266; these read EAEI…AKLE, EMLS…TAKA, and VEAI…QNVS.

The protein belongs to the SMC family. MukB subfamily. Homodimerization via its hinge domain. Binds to DNA via its C-terminal region. Interacts, and probably forms a ternary complex, with MukE and MukF via its C-terminal region. The complex formation is stimulated by calcium or magnesium. Interacts with tubulin-related protein FtsZ.

It is found in the cytoplasm. Its subcellular location is the nucleoid. Functionally, plays a central role in chromosome condensation, segregation and cell cycle progression. Functions as a homodimer, which is essential for chromosome partition. Involved in negative DNA supercoiling in vivo, and by this means organize and compact chromosomes. May achieve or facilitate chromosome segregation by condensation DNA from both sides of a centrally located replisome during cell division. This Escherichia coli O127:H6 (strain E2348/69 / EPEC) protein is Chromosome partition protein MukB.